The chain runs to 225 residues: Acidic leucine-rich nuclear phosphoprotein 32-related protein 2 (225 aa).

LRR repeat units follow at residues 39–60 (KLEL…PVLP), 61–82 (ALNY…DVLI), and 87–107 (EIKK…RTLK). Residues 121–161 (SSLGLLDDYRVKMFEMIPSLKILDGCDVDGEEVEEEFAAGE) form the LRRCT domain. The span at 155 to 175 (EEFAAGEGAEDSDEGDSDEDG) shows a compositional bias: acidic residues. The interval 155–225 (EEFAAGEGAE…DEPEAKKSAE (71 aa)) is disordered.

The protein belongs to the ANP32 family.

This Caenorhabditis elegans protein is Acidic leucine-rich nuclear phosphoprotein 32-related protein 2.